A 579-amino-acid polypeptide reads, in one-letter code: Suppressor of cytokine signaling 7 (579 aa).

Disordered stretches follow at residues 1 to 25 (MVFR…GPSE), 89 to 270 (PPPP…RTQS), and 295 to 315 (QRGL…RSLS). 3 stretches are compositionally biased toward pro residues: residues 89 to 99 (PPPPQPPPPAA), 155 to 165 (PPGPELPPVPF), and 185 to 196 (QPPPPPPPPGPL). Residues 124-492 (AESLETNSCS…GKFLYFLRSR (369 aa)) are mediates interaction with SORBS3. Residues 206 to 217 (GSFKIRLSRLFR) show a composition bias toward basic residues. The span at 301–311 (PHPPTPPPPPR) shows a compositional bias: pro residues. Positions 398-507 (WYWGPMNWED…PTPVQLLYPV (110 aa)) constitute an SH2 domain. The region spanning 502–552 (QLLYPVSRFSNVKSLQHLCRFRIRQLVRIDHIPDLPLPKPLISYIRKFYYY) is the SOCS box domain.

Substrate-recognition component of the ECS(SOCS7) complex, composed of SOCS7, CUL5, ELOB, ELOC and RNF7/RBX2. Interacts, via the third proline-rich region, with the second SH3 domain of the adapter protein NCK1. Also interacts with GRB2, INSR, PLCG1, SORBS3/vinexin, and phosphorylated STAT3 and STAT5. Interacts with SEPT6. Interacts with phosphorylated IRS4 and PIK3R1. As to expression, widely expressed with higher expression in brain and testis where it is expressed by spermatocytes and early spermatids. Also significantly expressed in spleen, skeletal muscle and kidney.

It is found in the cytoplasm. The protein resides in the nucleus. Its subcellular location is the cell membrane. The protein operates within protein modification; protein ubiquitination. Substrate-recognition component of a cullin-5-RING E3 ubiquitin-protein ligase complex (ECS complex, also named CRL5 complex), which mediates the ubiquitination and subsequent proteasomal degradation of target proteins, such as DAB1 and IRS1. Specifically recognizes and binds phosphorylated proteins via its SH2 domain, promoting their ubiquitination. The ECS(SOCS7) complex acts as a key regulator of reelin signaling by mediating ubiquitination and degradation of phosphorylated DAB1 in the cortical plate of the developing cerebral cortex, thereby regulating neuron positioning during cortex development. Functions in insulin signaling and glucose homeostasis through IRS1 ubiquitination and subsequent proteasomal degradation. Also inhibits prolactin, growth hormone and leptin signaling by preventing STAT3 and STAT5 activation, sequestering them in the cytoplasm and reducing their binding to DNA. The chain is Suppressor of cytokine signaling 7 from Mus musculus (Mouse).